We begin with the raw amino-acid sequence, 1379 residues long: Increased rDNA silencing protein 4 homolog (1379 aa).

Disordered regions lie at residues 1-25, 138-159, 240-314, 337-370, 534-573, 768-816, 1047-1110, and 1168-1208; these read MDAI…RNLS, TSTR…HHPR, EFDF…PLPS, SQPF…QAIM, ASKR…ASQQ, TDLH…NDIG, DAPS…KDSQ, and AVHE…DGKY. Positions 250 to 259 are enriched in basic and acidic residues; sequence PSDKNLEKLK. Polar residues predominate over residues 262 to 287; that stretch reads ASKQASESQSLKNMESLSLARSSPIL. The span at 541–555 shows a compositional bias: low complexity; the sequence is SQQTESASKSSSNIS. The segment covering 562–573 has biased composition (polar residues); that stretch reads PPSNFSISASQQ. Over residues 770-780 the composition is skewed to basic residues; sequence LHRKPRRKHKS. Residues 793–802 are compositionally biased toward acidic residues; the sequence is DESPQSDEVE. An EH domain is found at 1240–1329; that stretch reads AANKGYLLSK…DSVWLSSKRM (90 aa). In terms of domain architecture, EF-hand spans 1273–1308; the sequence is APTSVLAKIYDLVDRHHTGVLGRDEFIVGMFLIDQY.

The protein belongs to the IRS4 family.

Its function is as follows. Positive regulator of phosphatidylinositol 4,5-bisphosphate turnover and negatively regulates signaling through the cell integrity pathway. Involved in rDNA silencing. This is Increased rDNA silencing protein 4 homolog from Schizosaccharomyces pombe (strain 972 / ATCC 24843) (Fission yeast).